The chain runs to 426 residues: Pyruvate, phosphate dikinase regulatory protein, chloroplastic (426 aa).

Residues 1-41 constitute a chloroplast transit peptide; sequence MIGCAKPLAAPLQAWARPPSPAGRRLPPSFCAPDTSPALTR. Disordered stretches follow at residues 1–76 and 94–124; these read MIGC…HLDR and AALS…DGED. Positions 94-119 are enriched in low complexity; that stretch reads AALSSASVSAPPVIKSPRPEDAAVAA. 153–160 serves as a coordination point for ADP; the sequence is HSVNAALG.

This sequence belongs to the pyruvate, phosphate/water dikinase regulatory protein family. PDRP subfamily. In terms of assembly, homodimer at pH 7.5 and homotetramer at pH 8.3. Mg(2+) is required as a cofactor. As to expression, leaf mesophyll-cells.

Its subcellular location is the plastid. The protein localises to the chloroplast stroma. The enzyme catalyses N(tele)-phospho-L-histidyl/L-threonyl-[pyruvate, phosphate dikinase] + ADP = N(tele)-phospho-L-histidyl/O-phospho-L-threonyl-[pyruvate, phosphate dikinase] + AMP + H(+). It catalyses the reaction N(tele)-phospho-L-histidyl/O-phospho-L-threonyl-[pyruvate, phosphate dikinase] + phosphate + H(+) = N(tele)-phospho-L-histidyl/L-threonyl-[pyruvate, phosphate dikinase] + diphosphate. Its pathway is photosynthesis; C4 acid pathway. With respect to regulation, regulated by light/dark exposure. Functionally, bifunctional serine/threonine kinase and phosphorylase involved in the dark/light-mediated regulation of PPDK by catalyzing its phosphorylation/dephosphorylation. Dark/light-induced changes in stromal concentrations of the competing ADP and Pi substrates govern the direction of the reaction. In the dark, phosphorylates the catalytic intermediate of PPDK (PPDK-HisP), inactivating it. Light exposure induces the phosphorolysis reaction that reactivates PPDK. Phosphorylates PPDK at both Ser-528 and Thr-527. Can use ADP as a high specificity substrate and GDP as a lower affinity substrate, but has no activity with UDP. The polypeptide is Pyruvate, phosphate dikinase regulatory protein, chloroplastic (PDRP1) (Zea mays (Maize)).